The following is a 778-amino-acid chain: Endonuclease MutS2 (778 aa).

Gly328–Thr335 is an ATP binding site. Residues Leu702 to Lys777 enclose the Smr domain.

The protein belongs to the DNA mismatch repair MutS family. MutS2 subfamily. Homodimer. Binds to stalled ribosomes, contacting rRNA.

Its function is as follows. Endonuclease that is involved in the suppression of homologous recombination and thus may have a key role in the control of bacterial genetic diversity. Acts as a ribosome collision sensor, splitting the ribosome into its 2 subunits. Detects stalled/collided 70S ribosomes which it binds and splits by an ATP-hydrolysis driven conformational change. Acts upstream of the ribosome quality control system (RQC), a ribosome-associated complex that mediates the extraction of incompletely synthesized nascent chains from stalled ribosomes and their subsequent degradation. Probably generates substrates for RQC. The chain is Endonuclease MutS2 from Streptococcus pneumoniae (strain Taiwan19F-14).